The chain runs to 51 residues: ATP synthase protein 8 (51 aa).

A helical transmembrane segment spans residues 7 to 27; it reads LNWAMMTIMFSLSLLVSMIIL.

This sequence belongs to the ATPase protein 8 family. As to quaternary structure, F-type ATPases have 2 components, CF(1) - the catalytic core - and CF(0) - the membrane proton channel.

It is found in the mitochondrion membrane. Mitochondrial membrane ATP synthase (F(1)F(0) ATP synthase or Complex V) produces ATP from ADP in the presence of a proton gradient across the membrane which is generated by electron transport complexes of the respiratory chain. F-type ATPases consist of two structural domains, F(1) - containing the extramembraneous catalytic core and F(0) - containing the membrane proton channel, linked together by a central stalk and a peripheral stalk. During catalysis, ATP synthesis in the catalytic domain of F(1) is coupled via a rotary mechanism of the central stalk subunits to proton translocation. Part of the complex F(0) domain. Minor subunit located with subunit a in the membrane. In Limulus polyphemus (Atlantic horseshoe crab), this protein is ATP synthase protein 8 (MT-ATP8).